Reading from the N-terminus, the 295-residue chain is Putative aquaporin-12A (295 aa).

Residues methionine 1–alanine 21 form a helical membrane-spanning segment. The Extracellular portion of the chain corresponds to arginine 22–aspartate 54. The helical transmembrane segment at phenylalanine 55–leucine 75 threads the bilayer. Residues aspartate 76 to threonine 99 lie on the Cytoplasmic side of the membrane. Residues glycine 77–cysteine 114 constitute an intramembrane region (discontinuously helical). An NPA 1 motif is present at residues asparagine 81–threonine 83. The helical transmembrane segment at leucine 100 to serine 126 threads the bilayer. At aspartate 127–threonine 145 the chain is on the extracellular side. A helical membrane pass occupies residues serine 146–leucine 166. Over histidine 167–proline 178 the chain is Cytoplasmic. The helical transmembrane segment at alanine 179 to phenylalanine 199 threads the bilayer. Residues threonine 195–serine 206 constitute an intramembrane region (discontinuously helical). Positions asparagine 200–alanine 202 match the NPA 2 motif. At asparagine 200 to threonine 215 the chain is on the extracellular side. Residues leucine 216–leucine 236 form a helical membrane-spanning segment. Residues leucine 237–serine 295 lie on the Cytoplasmic side of the membrane. The disordered stretch occupies residues lysine 257–serine 295.

The protein belongs to the MIP/aquaporin (TC 1.A.8) family. AQP11/AQP12 subfamily. As to quaternary structure, homotetramer; each monomer provides an independent water pore. As to expression, restricted to the pancreas.

Its subcellular location is the membrane. The catalysed reaction is H2O(in) = H2O(out). Functionally, putative aquaporin. Could form homotetrameric transmembrane channels, with each monomer independently mediating water transport across the plasma membrane along its osmotic gradient. This Homo sapiens (Human) protein is Putative aquaporin-12A.